A 305-amino-acid polypeptide reads, in one-letter code: UDP-3-O-acyl-N-acetylglucosamine deacetylase (305 aa).

3 residues coordinate Zn(2+): histidine 79, histidine 238, and aspartate 242. The active-site Proton donor is histidine 265.

Belongs to the LpxC family. The cofactor is Zn(2+).

The catalysed reaction is a UDP-3-O-[(3R)-3-hydroxyacyl]-N-acetyl-alpha-D-glucosamine + H2O = a UDP-3-O-[(3R)-3-hydroxyacyl]-alpha-D-glucosamine + acetate. It participates in glycolipid biosynthesis; lipid IV(A) biosynthesis; lipid IV(A) from (3R)-3-hydroxytetradecanoyl-[acyl-carrier-protein] and UDP-N-acetyl-alpha-D-glucosamine: step 2/6. Functionally, catalyzes the hydrolysis of UDP-3-O-myristoyl-N-acetylglucosamine to form UDP-3-O-myristoylglucosamine and acetate, the committed step in lipid A biosynthesis. The chain is UDP-3-O-acyl-N-acetylglucosamine deacetylase from Escherichia fergusonii (strain ATCC 35469 / DSM 13698 / CCUG 18766 / IAM 14443 / JCM 21226 / LMG 7866 / NBRC 102419 / NCTC 12128 / CDC 0568-73).